A 587-amino-acid polypeptide reads, in one-letter code: Thiol:disulfide interchange protein DsbD 2 (587 aa).

Residues 1-18 (MRVLILLLMLLLPGLSQA) form the signal peptide. At 19-172 (QPGDDLFAPR…SLQAGNLAWS (154 aa)) the chain is on the periplasmic side. Cystine bridges form between Cys124–Cys130 and Cys188–Cys308. A helical transmembrane segment spans residues 173-193 (LLLFFGLGLLLAFAPCSLPML). Topologically, residues 194–216 (PILAGLVVGSGAGPRRGLLLAGS) are cytoplasmic. A helical membrane pass occupies residues 217 to 237 (YVLSMALVYAGLGVVAALLGG). Over 238 to 246 (NLQAWLQQP) the chain is Periplasmic. A helical transmembrane segment spans residues 247 to 267 (WLLGSFAALFVFLALPMFGFF). Over 268 to 299 (ELQLPAALRDRLDGLSRGRKGGSLAGAAALGA) the chain is Cytoplasmic. Residues 300 to 320 (LSGLLVGPCMTAPLAGALLYI) traverse the membrane as a helical segment. The Periplasmic segment spans residues 321–330 (AQTGNALHGG). Residues 331–351 (LVLFSLGLGIGMPLLLLVTVG) traverse the membrane as a helical segment. Residues 352-360 (SRFLPKPGP) lie on the Cytoplasmic side of the membrane. A helical transmembrane segment spans residues 361-381 (WMNLVKGVFGFLFLGTAWILL). Residues 382–383 (RP) lie on the Periplasmic side of the membrane. The helical transmembrane segment at 384–404 (LLGEALWIGLGGALLLVLAYA) threads the bilayer. At 405-416 (ALHTARGLARHA) the chain is on the cytoplasmic side. A helical transmembrane segment spans residues 417–437 (VLFGAAGCIFGLWGAAMLLGA). Topologically, residues 438–587 (AAGADDPWRP…AHWQATRERG (150 aa)) are periplasmic. The Thioredoxin domain maps to 448-585 (LQVYAAANRG…FLAHWQATRE (138 aa)). The cysteines at positions 500 and 503 are disulfide-linked.

This sequence belongs to the thioredoxin family. DsbD subfamily.

The protein resides in the cell inner membrane. The enzyme catalyses [protein]-dithiol + NAD(+) = [protein]-disulfide + NADH + H(+). The catalysed reaction is [protein]-dithiol + NADP(+) = [protein]-disulfide + NADPH + H(+). Its function is as follows. Required to facilitate the formation of correct disulfide bonds in some periplasmic proteins and for the assembly of the periplasmic c-type cytochromes. Acts by transferring electrons from cytoplasmic thioredoxin to the periplasm. This transfer involves a cascade of disulfide bond formation and reduction steps. In Pseudomonas aeruginosa (strain ATCC 15692 / DSM 22644 / CIP 104116 / JCM 14847 / LMG 12228 / 1C / PRS 101 / PAO1), this protein is Thiol:disulfide interchange protein DsbD 2.